A 229-amino-acid chain; its full sequence is PKHD-type hydroxylase RPD_3334 (229 aa).

In terms of domain architecture, Fe2OG dioxygenase spans 78 to 180; it reads QIFPPLFNRY…RVASFFWLQS (103 aa). Residues H98, D100, and H161 each contribute to the Fe cation site. R171 serves as a coordination point for 2-oxoglutarate.

Requires Fe(2+) as cofactor. L-ascorbate serves as cofactor.

The sequence is that of PKHD-type hydroxylase RPD_3334 from Rhodopseudomonas palustris (strain BisB5).